A 592-amino-acid polypeptide reads, in one-letter code: Inactive metallocarboxypeptidase ECM14 (592 aa).

The signal sequence occupies residues 1 to 21 (MRQFTHGTLLAILALANTISA). Residues 22 to 174 (IPSFSANNYP…QTVYESYPSS (153 aa)) constitute a propeptide that is removed on maturation. A compositionally biased stretch (polar residues) spans 170–179 (SYPSSSQRPT). A disordered region spans residues 170-191 (SYPSSSQRPTDNGRGFLPSRES). A Peptidase M14 domain is found at 202-521 (DYQPLSVIGP…NAVMVLGKFL (320 aa)). Histidine 264 and glutamate 267 together coordinate Zn(2+). Substrate contacts are provided by residues 264 to 267 (HARE), arginine 322, and 339 to 340 (DR). Cysteine 333 and cysteine 356 are oxidised to a cystine. N-linked (GlcNAc...) asparagine glycosylation occurs at asparagine 349. Histidine 396 contacts Zn(2+). 397 to 398 (SY) serves as a coordination point for substrate. Residues 542–592 (ADKPILDDGDDDEEEDGQDKNDDSWIPDEYKNDNDHDDDDDGWGLRRRRKR) form a disordered region. The segment covering 548 to 558 (DDGDDDEEEDG) has biased composition (acidic residues). The segment covering 559–575 (QDKNDDSWIPDEYKNDN) has biased composition (basic and acidic residues).

The protein belongs to the peptidase M14 family. It depends on Zn(2+) as a cofactor.

The protein localises to the vacuole. It is found in the secreted. Inactive carboxypeptidase that may play a role in cell wall organization and biogenesis. The protein is Inactive metallocarboxypeptidase ECM14 (ECM14) of Blastomyces gilchristii (strain SLH14081) (Blastomyces dermatitidis).